A 709-amino-acid polypeptide reads, in one-letter code: Polyribonucleotide nucleotidyltransferase (709 aa).

Positions 489 and 495 each coordinate Mg(2+). The KH domain maps to 556–615 (PKIDMIKIDVDKIKVVIGKGGETIDKIIAETGVKIDIDEEGNVSIFSSDQAAIDRTKDII). One can recognise an S1 motif domain in the interval 625-693 (GEVYHAKVVR…DKGRVDASMK (69 aa)).

Belongs to the polyribonucleotide nucleotidyltransferase family. Mg(2+) is required as a cofactor.

Its subcellular location is the cytoplasm. It carries out the reaction RNA(n+1) + phosphate = RNA(n) + a ribonucleoside 5'-diphosphate. Its function is as follows. Involved in mRNA degradation. Catalyzes the phosphorolysis of single-stranded polyribonucleotides processively in the 3'- to 5'-direction. This chain is Polyribonucleotide nucleotidyltransferase, found in Streptococcus agalactiae serotype Ia (strain ATCC 27591 / A909 / CDC SS700).